We begin with the raw amino-acid sequence, 199 residues long: Chaperone protein TorD (199 aa).

This sequence belongs to the TorD/DmsD family. TorD subfamily.

It is found in the cytoplasm. Involved in the biogenesis of TorA. Acts on TorA before the insertion of the molybdenum cofactor and, as a result, probably favors a conformation of the apoenzyme that is competent for acquiring the cofactor. The protein is Chaperone protein TorD of Escherichia coli O157:H7 (strain EC4115 / EHEC).